The chain runs to 618 residues: Probable Xaa-Pro aminopeptidase P (618 aa).

Mn(2+)-binding residues include Asp-414, Asp-425, Glu-523, and Glu-537.

This sequence belongs to the peptidase M24B family. The cofactor is Mn(2+).

The enzyme catalyses Release of any N-terminal amino acid, including proline, that is linked to proline, even from a dipeptide or tripeptide.. In terms of biological role, catalyzes the removal of a penultimate prolyl residue from the N-termini of peptides. The protein is Probable Xaa-Pro aminopeptidase P (AMPP) of Metarhizium acridum (strain CQMa 102).